We begin with the raw amino-acid sequence, 245 residues long: Orotidine 5'-phosphate decarboxylase (245 aa).

Substrate-binding positions include aspartate 22, lysine 44, 71-80, threonine 131, arginine 192, glutamine 201, glycine 221, and arginine 222; that span reads DLKFHDIPNT. Lysine 73 (proton donor) is an active-site residue.

This sequence belongs to the OMP decarboxylase family. Type 1 subfamily. As to quaternary structure, homodimer.

The enzyme catalyses orotidine 5'-phosphate + H(+) = UMP + CO2. Its pathway is pyrimidine metabolism; UMP biosynthesis via de novo pathway; UMP from orotate: step 2/2. Catalyzes the decarboxylation of orotidine 5'-monophosphate (OMP) to uridine 5'-monophosphate (UMP). The chain is Orotidine 5'-phosphate decarboxylase from Salmonella newport (strain SL254).